The following is a 1085-amino-acid chain: MTPAERRAFERQLQQEFPGLELHAWYRQYRSLKAAHPDAILLYRLGDFYETFDDDAKLVADLLEVTLTYKEFASQKGRDQKQRCPMAGIPYHAVEGYVARLVGAGYRVAIAEQITETPSSRTDTRPRSIFAAGIEQTSLTGSNRMVERKVVRVITPGTIIESGMIPAERNNYLAALIADHGRIGLAYADLSTGEFAAVEFSGERAAQQAQGELTRLNAAEILVPDRADLRLPGLEPSSARLEQDLEFLTREERELLLPGERVARRVERENNARWAHGRVTAWPERRWDLRNAHDTLLHQFGVRSLAGFGLEDRPLAIRAAGAIVQYARETQQGVVANLRSIRAYTPGDAMFLDPQTQRNLELLEGASGTTRGSLIGVLDQTRTPMGARLLRRWVSQPLCDLTRLHARHDAVERFVTDAILRASVRETLRRVGDMERVVNRIIQGVGVATPRDMARLRDALRALPELVAALGDWTPPPGEIDLTGVRTLPPSAATDPVSLTENGNERIEPNQTSAVSLRAQREARRRVSARYADEDLFGEEEQNAPPVGSSNHAVGTQPSADDEASPVTAFVDDQATETLALDPCADMLAFLETAIDDEPPALLGASNYLRAGENGEPPRRVIRPGFEPEIDQVVAASRDAQRWISELEPKERERTGIKSLRVDYNRVFGYYIEVPKTYADQVPKHYIRKQTLTTGERYFTDELKRYEEIVEQAQQRLIDLERRAFARICDVVTGAGARLLRTARMIATIDVFAALAEAAVRGRYVRPELYDDTRLRIVGGRHPVVEQTLDETFVPNDIEMDTETRQICLITGPNMSGKSTVLRQVALIALMAQIGSFVPADAAEIGLVDRIFTRIGAQDDIATGRSTFMVEMTETAALLAQSTRRSLIILDEVGRGTSTYDGMAIAQAVIEYIHNEPRLGCRTLFATHYHELTDLERTLPRLKNYHMAATEQDGRVVFLHELRPGGADRSYGIHVAELAGIPQSVIRRASELLAELERRAPRSAPPTVPARGDDRRSAGRASSSGAGAARGEQGRTLPDGQLSLFDLAPGPVIEMLRRIDINQLTPLEALNKLHELQKLARAGGG.

Residues 533 to 564 (DEDLFGEEEQNAPPVGSSNHAVGTQPSADDEA) form a disordered region. Residues 548-559 (GSSNHAVGTQPS) are compositionally biased toward polar residues. 812-819 (GPNMSGKS) is a binding site for ATP. The segment at 997–1042 (ERRAPRSAPPTVPARGDDRRSAGRASSSGAGAARGEQGRTLPDGQL) is disordered. Low complexity predominate over residues 1019–1031 (GRASSSGAGAARG).

Belongs to the DNA mismatch repair MutS family.

This protein is involved in the repair of mismatches in DNA. It is possible that it carries out the mismatch recognition step. This protein has a weak ATPase activity. The sequence is that of DNA mismatch repair protein MutS from Roseiflexus sp. (strain RS-1).